The sequence spans 527 residues: Tyrosine--tRNA ligase, cytoplasmic (527 aa).

Position 39 (Tyr-39) interacts with L-tyrosine. Residues 44 to 52 (TTGKPHVAY) carry the 'HIGH' region motif. L-tyrosine contacts are provided by Tyr-166, Gln-170, Asp-173, and Gln-188. The 'KMSKS' region motif lies at 222–226 (KMSSS). A Nuclear localization signal motif is present at residues 242-247 (KKKLKK). The segment at 337–362 (TNAAYPNPSKAKPAEKGTKNSEPETI) is disordered. The span at 348-358 (KPAEKGTKNSE) shows a compositional bias: basic and acidic residues. Residues 363-467 (VPSRLDIRVG…AECCAGERVY (105 aa)) form the tRNA-binding domain.

Belongs to the class-I aminoacyl-tRNA synthetase family. As to quaternary structure, homodimer.

It is found in the cytoplasm. The protein localises to the nucleus. The catalysed reaction is tRNA(Tyr) + L-tyrosine + ATP = L-tyrosyl-tRNA(Tyr) + AMP + diphosphate + H(+). In terms of biological role, catalyzes the attachment of tyrosine to tRNA(Tyr) in a two-step reaction: tyrosine is first activated by ATP to form Tyr-AMP and then transferred to the acceptor end of tRNA(Tyr). In Gallus gallus (Chicken), this protein is Tyrosine--tRNA ligase, cytoplasmic (YARS1).